A 421-amino-acid chain; its full sequence is Outer capsid protein P8 (421 aa).

This sequence belongs to the phytoreovirus outer capsid protein P8 family. In terms of assembly, homotrimer. Homomultimer. Interacts with host peroxisomal glycolate oxidase (GOX). This interaction mediates its relocation to virus factories peripheral to host peroxisomes.

Its subcellular location is the virion. The protein resides in the host cytoplasm. Its function is as follows. Capsid protein which self-assembles to form the outer icosahedral capsid with a T=13 symmetry, about 70 nm in diameter and consisting of 780 molecules capsid proteins. The sequence is that of Outer capsid protein P8 (S8) from Rice dwarf virus (isolate S) (RDV).